Here is a 113-residue protein sequence, read N- to C-terminus: Large ribosomal subunit protein uL24 (113 aa).

Belongs to the universal ribosomal protein uL24 family. As to quaternary structure, part of the 50S ribosomal subunit.

In terms of biological role, one of two assembly initiator proteins, it binds directly to the 5'-end of the 23S rRNA, where it nucleates assembly of the 50S subunit. Its function is as follows. One of the proteins that surrounds the polypeptide exit tunnel on the outside of the subunit. This is Large ribosomal subunit protein uL24 from Chlamydia abortus (strain DSM 27085 / S26/3) (Chlamydophila abortus).